The sequence spans 178 residues: Gamma-crystallin S (178 aa).

Position 2 is an N-acetylserine (serine 2). The tract at residues 2–5 (SKTG) is N-terminal arm. Beta/gamma crystallin 'Greek key' domains follow at residues 6–44 (AKISFYEDRNFQGRRYDCDCDCVDFRSYLSRCNSIRVEG) and 45–87 (GTWA…RAVH). Positions 88 to 93 (LSSGGQ) are connecting peptide. Beta/gamma crystallin 'Greek key' domains follow at residues 94 to 134 (YKIQ…KVLE) and 135 to 177 (GTWI…RRIV).

It belongs to the beta/gamma-crystallin family. Monomer.

Its function is as follows. Crystallins are the dominant structural components of the vertebrate eye lens. The chain is Gamma-crystallin S (Crygs) from Rattus norvegicus (Rat).